We begin with the raw amino-acid sequence, 135 residues long: Histone H3 (135 aa).

The segment at 1-40 is disordered; it reads MARTKQTARKSTGGKAPRKAVATKARKTAPPVGGVKKPHR. Over residues 19-31 the composition is skewed to low complexity; it reads KAVATKARKTAPP.

This sequence belongs to the histone H3 family. As to quaternary structure, the nucleosome is a histone octamer containing two molecules each of H2A, H2B, H3 and H4 assembled in one H3-H4 heterotetramer and two H2A-H2B heterodimers. The octamer wraps approximately 147 bp of DNA.

The protein resides in the nucleus. The protein localises to the chromosome. Its function is as follows. Core component of nucleosome. Nucleosomes wrap and compact DNA into chromatin, limiting DNA accessibility to the cellular machineries which require DNA as a template. Histones thereby play a central role in transcription regulation, DNA repair, DNA replication and chromosomal stability. DNA accessibility is regulated via a complex set of post-translational modifications of histones, also called histone code, and nucleosome remodeling. The sequence is that of Histone H3 from Mastigamoeba balamuthi (Phreatamoeba balamuthi).